Here is a 52-residue protein sequence, read N- to C-terminus: Ribosome biogenesis protein Nop10 (52 aa).

This sequence belongs to the NOP10 family.

In terms of biological role, involved in ribosome biogenesis; more specifically in 18S rRNA pseudouridylation and in cleavage of pre-rRNA. This is Ribosome biogenesis protein Nop10 from Methanococcus vannielii (strain ATCC 35089 / DSM 1224 / JCM 13029 / OCM 148 / SB).